The following is a 255-amino-acid chain: U2 small nuclear ribonucleoprotein A' (255 aa).

LRR repeat units follow at residues 20–41 (RDRELDLRGYKIPVIENLGATL), 43–64 (QFDAIDFSDNEIRKLDGFPLLR), 65–86 (RLKTLLVNNNRICRIGEGLDQA), and 89–110 (CLTELILTNNSLVELGDLDPLA). The LRRCT domain occupies 123–161 (NPVTNKKHYRLYVIYKVPQVRVLDFQKVKLKERQEAEKM). Lysine 172 carries the post-translational modification N6-acetyllysine; alternate. A Glycyl lysine isopeptide (Lys-Gly) (interchain with G-Cter in SUMO2); alternate cross-link involves residue lysine 172. Residues serine 178 and serine 197 each carry the phosphoserine modification. The tract at residues 179-199 (KTFNPGAGLPTDKKKGGPSAG) is disordered. Residue lysine 221 forms a Glycyl lysine isopeptide (Lys-Gly) (interchain with G-Cter in SUMO2) linkage. The segment at 222–255 (GLLQSGQIPGRERRSGPSDEGEEEIEDDTVTNGS) is disordered. Serine 236 and serine 255 each carry phosphoserine. Positions 240-255 (DEGEEEIEDDTVTNGS) are enriched in acidic residues.

It belongs to the U2 small nuclear ribonucleoprotein A family. Identified in the spliceosome B complex. Identified in the spliceosome C complex. Found in a pre-mRNA splicing complex with SFRS4, SFRS5, SNRNP70, SNRPA1, SRRM1 and SRRM2. Found in a pre-mRNA exonic splicing enhancer (ESE) complex with SNRNP70, SNRPA1, SRRM1 and TRA2B. Contributes to the binding of stem loop IV of U2 snRNA with SNRPB2.

The protein resides in the nucleus. In terms of biological role, involved in pre-mRNA splicing as component of the spliceosome. Associated with sn-RNP U2, where it contributes to the binding of stem loop IV of U2 snRNA. The polypeptide is U2 small nuclear ribonucleoprotein A' (Snrpa1) (Mus musculus (Mouse)).